We begin with the raw amino-acid sequence, 22 residues long: Caerin-3.1 (22 aa).

Lysine amide is present on lysine 22.

Belongs to the frog skin active peptide (FSAP) family. Caerin subfamily. As to expression, expressed by the skin dorsal glands.

The protein resides in the secreted. In terms of biological role, antibacterial peptide with narrow spectrum of activity. Inhibits the formation of NO by neuronal nitric oxide synthase. In Litoria rothii (Roth's tree frog), this protein is Caerin-3.1.